The following is a 1066-amino-acid chain: Coiled-coil domain-containing protein 73 (1066 aa).

2 coiled-coil regions span residues 47-134 (KAET…QVSQ) and 178-391 (LVRE…KTEE). Disordered regions lie at residues 568–600 (LDTR…SNPF), 719–811 (SENS…PKSG), 854–883 (LSPA…PEKT), 944–978 (KNIE…EERN), and 1003–1027 (VQQS…PGNN). Composition is skewed to polar residues over residues 591–600 (NTDGSESNPF), 742–781 (RTNT…TSQA), 789–811 (PLTT…PKSG), 857–869 (ATPS…TSAR), and 948–964 (SDPT…SNWS). Residues 967-978 (LDPKGQPREERN) show a composition bias toward basic and acidic residues. Polar residues predominate over residues 1003–1013 (VQQSHSQTVKV).

This is Coiled-coil domain-containing protein 73 (Ccdc73) from Mus musculus (Mouse).